A 429-amino-acid chain; its full sequence is Adenylosuccinate synthetase (429 aa).

Residues 12 to 18 (GDEGKGK) and 40 to 42 (GHT) each bind GTP. Catalysis depends on Asp13, which acts as the Proton acceptor. Positions 13 and 40 each coordinate Mg(2+). Residues 13 to 16 (DEGK), 38 to 41 (NAGH), Thr128, Arg142, Gln223, Thr238, and Arg302 contribute to the IMP site. The active-site Proton donor is the His41. Position 298–304 (298–304 (ATTGRKR)) interacts with substrate. GTP is bound by residues Arg304, 330 to 332 (KLD), and 412 to 414 (GTG).

This sequence belongs to the adenylosuccinate synthetase family. Homodimer. It depends on Mg(2+) as a cofactor.

Its subcellular location is the cytoplasm. The catalysed reaction is IMP + L-aspartate + GTP = N(6)-(1,2-dicarboxyethyl)-AMP + GDP + phosphate + 2 H(+). Its pathway is purine metabolism; AMP biosynthesis via de novo pathway; AMP from IMP: step 1/2. Its function is as follows. Plays an important role in the de novo pathway of purine nucleotide biosynthesis. Catalyzes the first committed step in the biosynthesis of AMP from IMP. The protein is Adenylosuccinate synthetase of Tropheryma whipplei (strain TW08/27) (Whipple's bacillus).